The following is a 131-amino-acid chain: Fumarate reductase subunit C (131 aa).

Transmembrane regions (helical) follow at residues 30–50 (EGTA…LFAL), 57–77 (WMGF…LITL), and 109–129 (IIKG…YVAL).

It belongs to the FrdC family. In terms of assembly, part of an enzyme complex containing four subunits: a flavoprotein (FrdA), an iron-sulfur protein (FrdB), and two hydrophobic anchor proteins (FrdC and FrdD).

It is found in the cell inner membrane. Functionally, two distinct, membrane-bound, FAD-containing enzymes are responsible for the catalysis of fumarate and succinate interconversion; fumarate reductase is used in anaerobic growth, and succinate dehydrogenase is used in aerobic growth. Anchors the catalytic components of the fumarate reductase complex to the cell inner membrane, binds quinones. The chain is Fumarate reductase subunit C from Salmonella dublin (strain CT_02021853).